A 493-amino-acid chain; its full sequence is Probable cytosol aminopeptidase (493 aa).

Residues Lys257 and Asp262 each coordinate Mn(2+). Lys269 is an active-site residue. 3 residues coordinate Mn(2+): Asp281, Asp341, and Glu343. The active site involves Arg345.

It belongs to the peptidase M17 family. The cofactor is Mn(2+).

Its subcellular location is the cytoplasm. The catalysed reaction is Release of an N-terminal amino acid, Xaa-|-Yaa-, in which Xaa is preferably Leu, but may be other amino acids including Pro although not Arg or Lys, and Yaa may be Pro. Amino acid amides and methyl esters are also readily hydrolyzed, but rates on arylamides are exceedingly low.. It catalyses the reaction Release of an N-terminal amino acid, preferentially leucine, but not glutamic or aspartic acids.. Functionally, presumably involved in the processing and regular turnover of intracellular proteins. Catalyzes the removal of unsubstituted N-terminal amino acids from various peptides. The polypeptide is Probable cytosol aminopeptidase (Prochlorococcus marinus (strain MIT 9211)).